Reading from the N-terminus, the 163-residue chain is Nucleotide-binding protein LA_3406 (163 aa).

The protein belongs to the YajQ family.

In terms of biological role, nucleotide-binding protein. The polypeptide is Nucleotide-binding protein LA_3406 (Leptospira interrogans serogroup Icterohaemorrhagiae serovar Lai (strain 56601)).